Here is a 512-residue protein sequence, read N- to C-terminus: Probable cytosol aminopeptidase (512 aa).

Mn(2+) contacts are provided by Lys281 and Asp286. Lys293 is a catalytic residue. 3 residues coordinate Mn(2+): Asp304, Asp363, and Glu365. Arg367 is an active-site residue.

It belongs to the peptidase M17 family. Mn(2+) is required as a cofactor.

It is found in the cytoplasm. The catalysed reaction is Release of an N-terminal amino acid, Xaa-|-Yaa-, in which Xaa is preferably Leu, but may be other amino acids including Pro although not Arg or Lys, and Yaa may be Pro. Amino acid amides and methyl esters are also readily hydrolyzed, but rates on arylamides are exceedingly low.. It catalyses the reaction Release of an N-terminal amino acid, preferentially leucine, but not glutamic or aspartic acids.. In terms of biological role, presumably involved in the processing and regular turnover of intracellular proteins. Catalyzes the removal of unsubstituted N-terminal amino acids from various peptides. This Koribacter versatilis (strain Ellin345) protein is Probable cytosol aminopeptidase.